The sequence spans 261 residues: RING finger protein 208 (261 aa).

Residues 83–106 form a disordered region; sequence PALEGAPHTPPLPRRPRKGSSELG. Serine 102 carries the post-translational modification Phosphoserine. The segment at 143–190 adopts an RING-type zinc-finger fold; the sequence is CPTCGHSYNVTQRRPRVLSCLHSVCEQCLQILYESCPKYKFISCPTCR.

The polypeptide is RING finger protein 208 (RNF208) (Homo sapiens (Human)).